Reading from the N-terminus, the 430-residue chain is Histidine--tRNA ligase (430 aa).

It belongs to the class-II aminoacyl-tRNA synthetase family. In terms of assembly, homodimer.

The protein resides in the cytoplasm. It carries out the reaction tRNA(His) + L-histidine + ATP = L-histidyl-tRNA(His) + AMP + diphosphate + H(+). This chain is Histidine--tRNA ligase, found in Lactococcus lactis subsp. lactis (strain IL1403) (Streptococcus lactis).